Here is a 386-residue protein sequence, read N- to C-terminus: MAREFLFTSESVTEGHPDKMADQISDAILDYIIERDPNARVACETLLSNGFAIIAGELKTTTYAPMQDIVREVIREIGYTDALYGFDYRSAGVLNGVGEQSPDINQGVDQAGGEIGAGDQGLMFGYACKETDVLMPLPITMAHRLTQELANARKEGVLPFLRPDGKAQVTVQYVDGKPKKIKTIVISTQHDPDVSYNRLKDAVIEEIVYKVIPKELIADDIVYHINPTGRFVIGGPQGDAGLTGRKIIVDTYGGSCPHGGGAFSGKDPTKVDRSGAYAARYVAKNLVASGACEKATVQIAYAIGVVEPVSIMVDSHGTAKVPDEKLEACVRDLFDLTPRGIIKTLDLLRPIYRKTAAYGHFGRELPEFTWEKTDKADEISDYLKIR.

H16 contributes to the ATP binding site. Residue D18 participates in Mg(2+) binding. E44 provides a ligand contact to K(+). Residues E57 and Q100 each contribute to the L-methionine site. Positions 100 to 110 (QSPDINQGVDQ) are flexible loop. ATP-binding positions include 164–166 (DGK), 230–231 (RF), D239, 245–246 (RK), A262, and K266. Residue D239 participates in L-methionine binding. K270 is an L-methionine binding site.

This sequence belongs to the AdoMet synthase family. In terms of assembly, homotetramer; dimer of dimers. Mg(2+) serves as cofactor. K(+) is required as a cofactor.

Its subcellular location is the cytoplasm. The catalysed reaction is L-methionine + ATP + H2O = S-adenosyl-L-methionine + phosphate + diphosphate. It participates in amino-acid biosynthesis; S-adenosyl-L-methionine biosynthesis; S-adenosyl-L-methionine from L-methionine: step 1/1. Functionally, catalyzes the formation of S-adenosylmethionine (AdoMet) from methionine and ATP. The overall synthetic reaction is composed of two sequential steps, AdoMet formation and the subsequent tripolyphosphate hydrolysis which occurs prior to release of AdoMet from the enzyme. The sequence is that of S-adenosylmethionine synthase from Nitratiruptor sp. (strain SB155-2).